The chain runs to 351 residues: Dihydroorotate dehydrogenase (quinone) (351 aa).

Residues 67–71 and Thr-91 contribute to the FMN site; that span reads AGFDK. Substrate is bound at residue Lys-71. Substrate is bound at residue 116–120; that stretch reads NAMGF. Asn-145 and Asn-178 together coordinate FMN. Residue Asn-178 coordinates substrate. Catalysis depends on Ser-181, which acts as the Nucleophile. Asn-183 is a binding site for substrate. The FMN site is built by Lys-214 and Thr-242. Position 243–244 (243–244) interacts with substrate; that stretch reads NT. Residues Gly-262, Gly-291, and 312 to 313 contribute to the FMN site; that span reads YS.

It belongs to the dihydroorotate dehydrogenase family. Type 2 subfamily. In terms of assembly, monomer. It depends on FMN as a cofactor.

The protein localises to the cell membrane. The enzyme catalyses (S)-dihydroorotate + a quinone = orotate + a quinol. It participates in pyrimidine metabolism; UMP biosynthesis via de novo pathway; orotate from (S)-dihydroorotate (quinone route): step 1/1. Its function is as follows. Catalyzes the conversion of dihydroorotate to orotate with quinone as electron acceptor. This chain is Dihydroorotate dehydrogenase (quinone), found in Helicobacter acinonychis (strain Sheeba).